The chain runs to 487 residues: MPGPRVWGKYLWRSPHSKGCPGAMWWLLLWGVLQACPTRGSVLLAQELPQQLTSPGYPEPYGKGQESSTDIKAPEGFAVRLVFQDFDLEPSQDCAGDSVTISFVGSDPSQFCGQQGSPLGRPPGQREFVSSGRSLRLTFRTQPSSENKTAHLHKGFLALYQTVAVNYSQPISEASRGSEAINAPGDNPAKVQNHCQEPYYQAAAAGALTCATPGTWKDRQDGEEVLQCMPVCGRPVTPIAQNQTTLGSSRAKLGNFPWQAFTSIHGRGGGALLGDRWILTAAHTIYPKDSVSLRKNQSVNVFLGHTAIDEMLKLGNHPVHRVVVHPDYRQNESHNFSGDIALLELQHSIPLGPNVLPVCLPDNETLYRSGLLGYVSGFGMEMGWLTTELKYSRLPVAPREACNAWLQKRQRPEVFSDNMFCVGDETQRHSVCQGDSGSVYVVWDNHAHHWVATGIVSWGIGCGEGYDFYTKVLSYVDWIKGVMNGKN.

A signal peptide spans 1–35 (MPGPRVWGKYLWRSPHSKGCPGAMWWLLLWGVLQA). The 125-residue stretch at 39 to 163 (RGSVLLAQEL…KGFLALYQTV (125 aa)) folds into the CUB domain. A disulfide bridge connects residues Cys94 and Cys112. N-linked (GlcNAc...) asparagine glycosylation is found at Asn147 and Asn166. Residues 165-230 (VNYSQPISEA…DGEEVLQCMP (66 aa)) form the Sushi domain. An intrachain disulfide couples Cys195 to Cys228. Asn242 carries an N-linked (GlcNAc...) (complex) asparagine glycan. The Peptidase S1 domain occupies 245-484 (TLGSSRAKLG…YVDWIKGVMN (240 aa)). His283 serves as the catalytic Charge relay system. N-linked (GlcNAc...) asparagine glycosylation is present at Asn296. Catalysis depends on Asp339, which acts as the Charge relay system. The N-linked (GlcNAc...) asparagine glycan is linked to Asn363. 2 disulfides stabilise this stretch: Cys402–Cys421 and Cys432–Cys462. Ser436 (charge relay system) is an active-site residue.

Belongs to the peptidase S1 family. As to expression, highly expressed in placenta, liver, kidney, pancreas, moderately in lung, spleen, prostate, ovary, colon, and PBL, and weakly in heart, skeletal muscle, thymus, testis, and small intestine. Expressed in PC-3 (prostate adenocarcinoma) and SK-OV-3 (ovary adenocarcinoma) cells, but not in LoVo and HT-29 (colon adenocarcinoma), SMMC7721 (hepatocellular carcinoma), CaoV-3 (ovary adenocarcinoma), HeLa (cervix epithelioid carcinoma), MCF-7 (breast adenocarcinoma), U-251MG (glioma) or A-549 (lung carcinoma) cells. Widely expressed in myeloid leukemia cell lines, including K-562 (chronic myelogenous leukemia), THP-1 (myelomonocytic leukemia), HL-60 and NB4 (promyelocytic leukemia), and KG-1 (acute myelogenous leukemia) cells. Expressed mainly in the liver and in serum (at protein level).

The protein localises to the secreted. Mediates the proteolytic cleavage of HP/haptoglobin in the endoplasmic reticulum. This Homo sapiens (Human) protein is Complement C1r subcomponent-like protein (C1RL).